A 633-amino-acid chain; its full sequence is Phosphomethylpyrimidine synthase (633 aa).

Positions methionine 1–alanine 13 are enriched in polar residues. A disordered region spans residues methionine 1–serine 22. Substrate-binding positions include asparagine 221, methionine 250, tyrosine 279, histidine 315, serine 335–glycine 337, aspartate 376–arginine 379, and glutamate 415. Residue histidine 419 participates in Zn(2+) binding. Tyrosine 442 contacts substrate. Position 483 (histidine 483) interacts with Zn(2+). 3 residues coordinate [4Fe-4S] cluster: cysteine 563, cysteine 566, and cysteine 571.

The protein belongs to the ThiC family. Homodimer. The cofactor is [4Fe-4S] cluster.

It catalyses the reaction 5-amino-1-(5-phospho-beta-D-ribosyl)imidazole + S-adenosyl-L-methionine = 4-amino-2-methyl-5-(phosphooxymethyl)pyrimidine + CO + 5'-deoxyadenosine + formate + L-methionine + 3 H(+). The protein operates within cofactor biosynthesis; thiamine diphosphate biosynthesis. Its function is as follows. Catalyzes the synthesis of the hydroxymethylpyrimidine phosphate (HMP-P) moiety of thiamine from aminoimidazole ribotide (AIR) in a radical S-adenosyl-L-methionine (SAM)-dependent reaction. This Bradyrhizobium sp. (strain BTAi1 / ATCC BAA-1182) protein is Phosphomethylpyrimidine synthase.